A 120-amino-acid chain; its full sequence is Ribonuclease P protein component (120 aa).

This sequence belongs to the RnpA family. As to quaternary structure, consists of a catalytic RNA component (M1 or rnpB) and a protein subunit.

It carries out the reaction Endonucleolytic cleavage of RNA, removing 5'-extranucleotides from tRNA precursor.. Functionally, RNaseP catalyzes the removal of the 5'-leader sequence from pre-tRNA to produce the mature 5'-terminus. It can also cleave other RNA substrates such as 4.5S RNA. The protein component plays an auxiliary but essential role in vivo by binding to the 5'-leader sequence and broadening the substrate specificity of the ribozyme. This chain is Ribonuclease P protein component, found in Mycobacterium leprae (strain Br4923).